Consider the following 152-residue polypeptide: Mediator of RNA polymerase II transcription subunit 9 (152 aa).

Positions 98 to 150 (IKRCKALLQENEEVRNLLANSIEEWENIIADKEQQLRVKAKVLRDLDARIEKI) form a coiled coil.

This sequence belongs to the Mediator complex subunit 9 family. Component of the Mediator complex.

It is found in the nucleus. In terms of biological role, component of the Mediator complex, a coactivator involved in the regulated transcription of nearly all RNA polymerase II-dependent genes. Mediator functions as a bridge to convey information from gene-specific regulatory proteins to the basal RNA polymerase II transcription machinery. Mediator is recruited to promoters by direct interactions with regulatory proteins and serves as a scaffold for the assembly of a functional preinitiation complex with RNA polymerase II and the general transcription factors. The polypeptide is Mediator of RNA polymerase II transcription subunit 9 (CSE2) (Candida glabrata (strain ATCC 2001 / BCRC 20586 / JCM 3761 / NBRC 0622 / NRRL Y-65 / CBS 138) (Yeast)).